Here is a 121-residue protein sequence, read N- to C-terminus: HTH-type transcriptional regulator Rv1152 (121 aa).

Residues 15-83 (KPLFDQLRTQ…GRFGTFISRF (69 aa)) form the HTH gntR-type domain. A DNA-binding region (H-T-H motif) is located at residues 43 to 62 (VRDLAGQLGVAANTVARAYR).

The protein resides in the cytoplasm. The protein localises to the secreted. Its subcellular location is the cell wall. In terms of biological role, transcriptional regulator that modulates resistance to vancomycin and aminoglycosides. Negatively regulates the expression of several genes responsive to vancomycin, resulting in decreased susceptibility of bacteria to vancomycin. Negatively regulates the expression of genes encoding the ribosome binding protein Hsp, the small subunit of sulfate adenylyltransferase CysD, the L-lysine-epsilon aminotransferase LAT and the protease HtpX. Also modulates purine metabolism and aminoglycoside antibiotic resistance. Negatively regulates the expression of purine metabolism-related genes and the accumulation of purine metabolites, which affects aminoglycoside antibiotic resistance. In Mycobacterium tuberculosis (strain ATCC 25618 / H37Rv), this protein is HTH-type transcriptional regulator Rv1152.